Here is a 397-residue protein sequence, read N- to C-terminus: 1-deoxy-D-xylulose 5-phosphate reductoisomerase (397 aa).

Positions 10, 11, 12, 13, 36, 37, 38, and 124 each coordinate NADPH. A 1-deoxy-D-xylulose 5-phosphate-binding site is contributed by Lys125. Position 126 (Glu126) interacts with NADPH. Asp150 is a binding site for Mn(2+). 4 residues coordinate 1-deoxy-D-xylulose 5-phosphate: Ser151, Glu152, Ser186, and His209. Glu152 lines the Mn(2+) pocket. Gly215 is an NADPH binding site. 1-deoxy-D-xylulose 5-phosphate-binding residues include Ser222, Asn227, Lys228, and Glu231. Glu231 is a Mn(2+) binding site.

This sequence belongs to the DXR family. In terms of assembly, homodimer. Mg(2+) is required as a cofactor. The cofactor is Mn(2+).

The catalysed reaction is 2-C-methyl-D-erythritol 4-phosphate + NADP(+) = 1-deoxy-D-xylulose 5-phosphate + NADPH + H(+). Its pathway is isoprenoid biosynthesis; isopentenyl diphosphate biosynthesis via DXP pathway; isopentenyl diphosphate from 1-deoxy-D-xylulose 5-phosphate: step 1/6. Catalyzes the NADPH-dependent rearrangement and reduction of 1-deoxy-D-xylulose-5-phosphate (DXP) to 2-C-methyl-D-erythritol 4-phosphate (MEP). The protein is 1-deoxy-D-xylulose 5-phosphate reductoisomerase of Proteus mirabilis (strain HI4320).